The chain runs to 496 residues: Sugar transporter ERD6 (496 aa).

A run of 6 helical transmembrane segments spans residues 58 to 78 (VFLS…GVGF), 94 to 114 (VAEY…GAVF), 128 to 148 (MLFC…AQNA), 156 to 176 (LLLG…IAEI), 183 to 203 (GSFV…FFII), and 211 to 231 (LLTV…FFIP). Residue Ser256 is modified to Phosphoserine. Transmembrane regions (helical) follow at residues 292 to 312 (YPLI…SSGV), 329 to 349 (IGTS…TVLV), 364 to 384 (AMGL…FGIL), 394 to 414 (IGVL…PWII), 430 to 450 (LVTV…NFML), and 456 to 476 (GMFL…YFLV).

This sequence belongs to the major facilitator superfamily. Sugar transporter (TC 2.A.1.1) family. As to expression, expressed in both shoots and roots. In roots, expressed in epidermal cells and especially strongly in cortex cells. In flowers, expressed in sepals.

The protein resides in the membrane. Sugar transporter. In Arabidopsis thaliana (Mouse-ear cress), this protein is Sugar transporter ERD6 (ERD6).